Consider the following 526-residue polypeptide: Nucleobase-ascorbate transporter 4 (526 aa).

12 helical membrane passes run 42 to 62, 69 to 89, 91 to 111, 131 to 151, 157 to 177, 186 to 206, 217 to 237, 282 to 302, 359 to 381, 388 to 410, 420 to 440, and 457 to 477; these read IVML…MGGG, VINT…LFGS, LPVV…ITFS, IQGA…FGLW, FLSP…LLAF, IEIG…LPHL, FAVL…TAAG, AFAM…SFIA, RVVQ…GAVL, IFAA…LLQF, FILG…TEYL, and VIMQ…AFLL.

This sequence belongs to the nucleobase:cation symporter-2 (NCS2) (TC 2.A.40) family. In terms of tissue distribution, highly expressed in the root central cylinder. Expressed in the filaments and stigmatic papillae of pollinated flowers and developing siliques.

The protein resides in the membrane. The protein is Nucleobase-ascorbate transporter 4 (NAT4) of Arabidopsis thaliana (Mouse-ear cress).